The following is a 289-amino-acid chain: ATP synthase gamma chain (289 aa).

It belongs to the ATPase gamma chain family. In terms of assembly, F-type ATPases have 2 components, CF(1) - the catalytic core - and CF(0) - the membrane proton channel. CF(1) has five subunits: alpha(3), beta(3), gamma(1), delta(1), epsilon(1). CF(0) has three main subunits: a, b and c.

The protein localises to the cell inner membrane. Its function is as follows. Produces ATP from ADP in the presence of a proton gradient across the membrane. The gamma chain is believed to be important in regulating ATPase activity and the flow of protons through the CF(0) complex. The chain is ATP synthase gamma chain from Azoarcus sp. (strain BH72).